Consider the following 384-residue polypeptide: Succinate--CoA ligase [ADP-forming] subunit beta (384 aa).

An ATP-grasp domain is found at 9–242; the sequence is KAILAQYKVP…LNEEDPLEVE (234 aa). ATP is bound by residues Lys-45, 52-54, Glu-98, Leu-101, and Glu-106; that span reads GRG. The Mg(2+) site is built by Asn-197 and Asp-211. Substrate-binding positions include Asn-262 and 319 to 321; that span reads GIL.

The protein belongs to the succinate/malate CoA ligase beta subunit family. In terms of assembly, heterotetramer of two alpha and two beta subunits. Requires Mg(2+) as cofactor.

The enzyme catalyses succinate + ATP + CoA = succinyl-CoA + ADP + phosphate. It catalyses the reaction GTP + succinate + CoA = succinyl-CoA + GDP + phosphate. Its pathway is carbohydrate metabolism; tricarboxylic acid cycle; succinate from succinyl-CoA (ligase route): step 1/1. Succinyl-CoA synthetase functions in the citric acid cycle (TCA), coupling the hydrolysis of succinyl-CoA to the synthesis of either ATP or GTP and thus represents the only step of substrate-level phosphorylation in the TCA. The beta subunit provides nucleotide specificity of the enzyme and binds the substrate succinate, while the binding sites for coenzyme A and phosphate are found in the alpha subunit. In Solibacter usitatus (strain Ellin6076), this protein is Succinate--CoA ligase [ADP-forming] subunit beta.